The following is a 293-amino-acid chain: Protein nud-2 (293 aa).

A coiled-coil region spans residues 36 to 147 (EIEKMMDSEL…EKIAMLESEL (112 aa)). Positions 239-293 (KSQRVSTGTGAGACINRIVKDLMTKVERLDSILSTIRVSNNSSNNNSSHLTTTRA) are required for interaction with unc-83 isoform c.

The protein belongs to the nudE family. Component of a dynein-regulating complex composed of at least lis-1 and nud-2. Interacts with lis-1; the interaction is direct. Interacts (via C-terminus) with unc-83; the interaction is direct, and is required for recruitment of nud-2 to the nuclear envelope. As to expression, expressed in ventral cord neurons, the pharynx, seam cells of the hypodermis and in vulval muscle cells.

Its subcellular location is the nucleus envelope. Part of a complex with lis-1, which is recruited to the nuclear envelope by unc-83, where, in turn, it recruits dynein to the nuclear surface and regulates nuclear migration in hypodermal precursor cells. Plays a role in GABAergic synaptic vesicle localization in the ventral nerve cord. This is Protein nud-2 from Caenorhabditis elegans.